A 347-amino-acid polypeptide reads, in one-letter code: Microfibril-associated glycoprotein 3 (347 aa).

The first 22 residues, 1–22 (MKLHYCLCILLVVTFVPTALVL), serve as a signal peptide directing secretion. Residues 23–139 (EDVTPLGTNQ…TLRVIFTSGD (117 aa)) are Extracellular-facing. 4 N-linked (GlcNAc...) asparagine glycosylation sites follow: Asn31, Asn36, Asn63, and Asn103. The Ig-like C2-type domain maps to 47 to 130 (AGSYSGDDVI…SPTRASYSVT (84 aa)). A disulfide bond links Cys68 and Cys117. The helical transmembrane segment at 140 to 160 (MSVYYMVVCLIAFTITLILNV) threads the bilayer. Topologically, residues 161-347 (TRLCLMSTHL…SAEGSTHHRE (187 aa)) are cytoplasmic. Positions 280–347 (NPELGRSNSP…SAEGSTHHRE (68 aa)) are disordered. Over residues 311-331 (VHLQSETKSIGTDSQDSSHFS) the composition is skewed to polar residues.

In terms of processing, glycosylated.

It localises to the cell membrane. In terms of biological role, component of the elastin-associated microfibrils. The polypeptide is Microfibril-associated glycoprotein 3 (Mfap3) (Rattus norvegicus (Rat)).